We begin with the raw amino-acid sequence, 288 residues long: Alpha/beta hydrolase domain-containing protein 17B (288 aa).

Residues Ser-170, Asp-235, and His-264 each act as charge relay system in the active site.

It belongs to the AB hydrolase superfamily. ABHD17 family. Palmitoylated on cysteine residues located in a cysteine cluster at the N-terminus which promotes membrane localization.

Its subcellular location is the cell membrane. It localises to the recycling endosome membrane. It is found in the cell projection. The protein resides in the dendritic spine. The protein localises to the postsynaptic density membrane. It carries out the reaction S-hexadecanoyl-L-cysteinyl-[protein] + H2O = L-cysteinyl-[protein] + hexadecanoate + H(+). Its function is as follows. Hydrolyzes fatty acids from S-acylated cysteine residues in proteins. This is Alpha/beta hydrolase domain-containing protein 17B from Xenopus tropicalis (Western clawed frog).